The following is an 84-amino-acid chain: Beta-defensin 119 (84 aa).

The signal sequence occupies residues 1 to 21; sequence MKLLYLFLAILLAIEEPVISG. 2 cysteine pairs are disulfide-bonded: C35/C49 and C39/C56.

This sequence belongs to the beta-defensin family.

It is found in the secreted. Functionally, has antibacterial activity. This Pan troglodytes (Chimpanzee) protein is Beta-defensin 119 (DEFB119).